Consider the following 146-residue polypeptide: UPF0260 protein Sama_1927 (146 aa).

This sequence belongs to the UPF0260 family.

This is UPF0260 protein Sama_1927 from Shewanella amazonensis (strain ATCC BAA-1098 / SB2B).